Here is a 354-residue protein sequence, read N- to C-terminus: Holliday junction branch migration complex subunit RuvB (354 aa).

The interval 1–183 is large ATPase domain (RuvB-L); that stretch reads MTGDNLVSAY…FGFVAHLDFY (183 aa). ATP contacts are provided by residues arginine 23, glycine 64, lysine 67, threonine 68, serine 69, 130-132, arginine 173, tyrosine 183, and arginine 220; that span reads EDF. Threonine 68 is a binding site for Mg(2+). Residues 184–254 are small ATPAse domain (RuvB-S); sequence SPADLETLLH…AARAALLVYD (71 aa). The head domain (RuvB-H) stretch occupies residues 257–354; that stretch reads ALGLDRLDRQ…DLFSVEPDQP (98 aa). Positions 312 and 317 each coordinate DNA. Residues 330-354 form a disordered region; the sequence is TPPNGIFGSDAPPASDLFSVEPDQP.

This sequence belongs to the RuvB family. As to quaternary structure, homohexamer. Forms an RuvA(8)-RuvB(12)-Holliday junction (HJ) complex. HJ DNA is sandwiched between 2 RuvA tetramers; dsDNA enters through RuvA and exits via RuvB. An RuvB hexamer assembles on each DNA strand where it exits the tetramer. Each RuvB hexamer is contacted by two RuvA subunits (via domain III) on 2 adjacent RuvB subunits; this complex drives branch migration. In the full resolvosome a probable DNA-RuvA(4)-RuvB(12)-RuvC(2) complex forms which resolves the HJ.

The protein resides in the cytoplasm. It carries out the reaction ATP + H2O = ADP + phosphate + H(+). The RuvA-RuvB-RuvC complex processes Holliday junction (HJ) DNA during genetic recombination and DNA repair, while the RuvA-RuvB complex plays an important role in the rescue of blocked DNA replication forks via replication fork reversal (RFR). RuvA specifically binds to HJ cruciform DNA, conferring on it an open structure. The RuvB hexamer acts as an ATP-dependent pump, pulling dsDNA into and through the RuvAB complex. RuvB forms 2 homohexamers on either side of HJ DNA bound by 1 or 2 RuvA tetramers; 4 subunits per hexamer contact DNA at a time. Coordinated motions by a converter formed by DNA-disengaged RuvB subunits stimulates ATP hydrolysis and nucleotide exchange. Immobilization of the converter enables RuvB to convert the ATP-contained energy into a lever motion, pulling 2 nucleotides of DNA out of the RuvA tetramer per ATP hydrolyzed, thus driving DNA branch migration. The RuvB motors rotate together with the DNA substrate, which together with the progressing nucleotide cycle form the mechanistic basis for DNA recombination by continuous HJ branch migration. Branch migration allows RuvC to scan DNA until it finds its consensus sequence, where it cleaves and resolves cruciform DNA. This is Holliday junction branch migration complex subunit RuvB from Salinispora arenicola (strain CNS-205).